A 411-amino-acid polypeptide reads, in one-letter code: Coiled-coil domain-containing protein 159 (411 aa).

The interval 84-113 (EQAGKSGAWEKEWDSEPQPHEGTPCSSSDV) is disordered. Positions 91–102 (AWEKEWDSEPQP) are enriched in basic and acidic residues. Residues 269–305 (EELELVREEVTFIYQKLQDQEDEISENLLNIQKMQKT) adopt a coiled-coil conformation. The tract at residues 372–411 (RASSLRGQKGHQCKSSQCPSWDSDSDWERPFSKSGSYPPA) is disordered. Residues 384–393 (CKSSQCPSWD) show a composition bias toward polar residues.

As to quaternary structure, interacts with DYNLT2. Interacts with GGNBP1. Interacts with OSBP2. Expressed in spermatids but undetectable in the spermatozoon (at protein level). Highly expressed in the testis (at protein level).

In terms of biological role, functions during spermatid development; may participate in the centrosome reduction procedure of spermatids and is required for the formation of the connecting piece/sperm head-tail coupling apparatus (HTCA) and the correct and tight attachment of the flagellum to the nuclear envelope. The chain is Coiled-coil domain-containing protein 159 (Ccdc159) from Mus musculus (Mouse).